A 201-amino-acid polypeptide reads, in one-letter code: MINSFIVIFLSFLIFINYANLVCVEATHVYGRRSHSNGMHGNGARRAVAVLRGDAGVSGIIYFQQGSGGSITTISGSVSGLTPGLHGFHVHQYGDQTNGCTSAGDHYNPFGKTHGGPNDRIKHIGDLGNIVAGANGVAEVYINSYDIKLRGPLSVIGHSLVVHANTDDLGQGTGNMREESLKTGNAGSRLACGVIGIAAVS.

An N-terminal signal peptide occupies residues 1–42 (MINSFIVIFLSFLIFINYANLVCVEATHVYGRRSHSNGMHGN). The Cu cation site is built by H89, H91, and H106. Residues C100 and C192 are joined by a disulfide bond. Residues H106, H114, H123, and D126 each coordinate Zn(2+). Position 163 (H163) interacts with Cu cation.

This sequence belongs to the Cu-Zn superoxide dismutase family. Homodimer. Requires Cu cation as cofactor. Zn(2+) is required as a cofactor.

The protein resides in the secreted. It is found in the extracellular space. The catalysed reaction is 2 superoxide + 2 H(+) = H2O2 + O2. Destroys radicals which are normally produced within the cells and which are toxic to biological systems. May act in the parasite defense against phagocyte-generated reactive oxygen species. This is Extracellular superoxide dismutase [Cu-Zn] (sod-4) from Onchocerca volvulus.